Reading from the N-terminus, the 760-residue chain is Catecholate siderophore receptor Fiu (760 aa).

A signal peptide spans 1–31 (MENNRNFPARQFHSLTFFAGLCIGITPVAQA). Positions 67–175 (PVADTTRTMT…PTGSINMISK (109 aa)) constitute a TBDR plug domain. In terms of domain architecture, TBDR beta-barrel spans 180-760 (DSGIDASASI…TFLLTANMHF (581 aa)). Positions 743–760 (RYHPGEPRTFLLTANMHF) match the TonB C-terminal box motif.

The protein belongs to the TonB-dependent receptor family.

The protein resides in the cell outer membrane. Functionally, involved in the active transport across the outer membrane of iron complexed with catecholate siderophores such as dihydroxybenzoylserine and dihydroxybenzoate. It derives its energy for transport by interacting with the trans-periplasmic membrane protein TonB. Can also transport catechol-substituted cephalosporins. Receptor for microcins M, H47 and E492. In Escherichia coli (strain UTI89 / UPEC), this protein is Catecholate siderophore receptor Fiu (fiu).